The following is a 134-amino-acid chain: Large ribosomal subunit protein bL20 (134 aa).

Belongs to the bacterial ribosomal protein bL20 family.

Its function is as follows. Binds directly to 23S ribosomal RNA and is necessary for the in vitro assembly process of the 50S ribosomal subunit. It is not involved in the protein synthesizing functions of that subunit. In Sinorhizobium fredii (strain NBRC 101917 / NGR234), this protein is Large ribosomal subunit protein bL20.